Here is a 624-residue protein sequence, read N- to C-terminus: Bifunctional protein ArgH (624 aa).

Residues M1–V466 are argininosuccinate lyase. An N-acetyltransferase domain is found at V464–Q614. The probable acetyltransferase stretch occupies residues R467–A624.

It in the N-terminal section; belongs to the lyase 1 family. Argininosuccinate lyase subfamily.

It localises to the cytoplasm. The enzyme catalyses 2-(N(omega)-L-arginino)succinate = fumarate + L-arginine. The protein operates within amino-acid biosynthesis; L-arginine biosynthesis; L-arginine from L-ornithine and carbamoyl phosphate: step 3/3. This chain is Bifunctional protein ArgH (argH), found in Aliivibrio fischeri (strain ATCC 700601 / ES114) (Vibrio fischeri).